The primary structure comprises 515 residues: NADH-ubiquinone oxidoreductase chain 2 (515 aa).

5 helical membrane passes run Trp-63–Ser-83, Val-250–Ala-270, Phe-299–Ile-319, Ala-356–Cys-376, and Phe-379–Val-399.

This sequence belongs to the complex I subunit 2 family.

It localises to the mitochondrion inner membrane. The enzyme catalyses a ubiquinone + NADH + 5 H(+)(in) = a ubiquinol + NAD(+) + 4 H(+)(out). Its function is as follows. Core subunit of the mitochondrial membrane respiratory chain NADH dehydrogenase (Complex I) that is believed to belong to the minimal assembly required for catalysis. Complex I functions in the transfer of electrons from NADH to the respiratory chain. The immediate electron acceptor for the enzyme is believed to be ubiquinone. The polypeptide is NADH-ubiquinone oxidoreductase chain 2 (ND2) (Beta vulgaris (Sugar beet)).